Consider the following 123-residue polypeptide: Small ribosomal subunit protein uS12 (123 aa).

The tract at residues 1 to 28 (MPTIQQLIRKPREPKRVRSKSQHLESCP) is disordered. Aspartate 89 is modified (3-methylthioaspartic acid).

Belongs to the universal ribosomal protein uS12 family. Part of the 30S ribosomal subunit. Contacts proteins S8 and S17. May interact with IF1 in the 30S initiation complex.

Functionally, with S4 and S5 plays an important role in translational accuracy. Interacts with and stabilizes bases of the 16S rRNA that are involved in tRNA selection in the A site and with the mRNA backbone. Located at the interface of the 30S and 50S subunits, it traverses the body of the 30S subunit contacting proteins on the other side and probably holding the rRNA structure together. The combined cluster of proteins S8, S12 and S17 appears to hold together the shoulder and platform of the 30S subunit. This Cereibacter sphaeroides (strain ATCC 17029 / ATH 2.4.9) (Rhodobacter sphaeroides) protein is Small ribosomal subunit protein uS12.